Here is a 925-residue protein sequence, read N- to C-terminus: Eukaryotic translation initiation factor 3 subunit A (925 aa).

The disordered stretch occupies residues glutamine 108–glutamate 127. Residues aspartate 112–glutamine 121 show a composition bias toward basic and acidic residues. The region spanning phenylalanine 324–phenylalanine 498 is the PCI domain. Disordered stretches follow at residues proline 509–asparagine 544 and lysine 839–glycine 925. Coiled-coil stretches lie at residues glutamate 534–leucine 666 and serine 785–serine 885. The span at lysine 839–asparagine 880 shows a compositional bias: basic and acidic residues. Over residues arginine 916 to glycine 925 the composition is skewed to basic residues.

It belongs to the eIF-3 subunit A family. Component of the eukaryotic translation initiation factor 3 (eIF-3) complex.

It is found in the cytoplasm. Its function is as follows. RNA-binding component of the eukaryotic translation initiation factor 3 (eIF-3) complex, which is involved in protein synthesis of a specialized repertoire of mRNAs and, together with other initiation factors, stimulates binding of mRNA and methionyl-tRNAi to the 40S ribosome. The eIF-3 complex specifically targets and initiates translation of a subset of mRNAs involved in cell proliferation. The protein is Eukaryotic translation initiation factor 3 subunit A of Kluyveromyces lactis (strain ATCC 8585 / CBS 2359 / DSM 70799 / NBRC 1267 / NRRL Y-1140 / WM37) (Yeast).